Consider the following 257-residue polypeptide: MSINDKPIGFFDSGVGGISVLKEAFKLLPKEDFLYYGDSKNTPYGTKKVEEVKALTFNATDFLMSKGIKALVVACNTATSVTINDLRENYDIPIIGIEPALKPAVELKKGGKIIIMATPMTLAEKKFANLMDLYKETEDIEPLPCPGLPELIEQGIVSGDVIYNYLKDKFSKYDDEKISSIVLGCTHYPFVEETLKEVTHNKACIIDGSFGTSRELKRQLKNSNMLREENRVGKVTIFNSREDKDIIDLSYKLFNMK.

Substrate-binding positions include 12-13 and 44-45; these read DS and YG. Cys75 serves as the catalytic Proton donor/acceptor. 76–77 is a binding site for substrate; that stretch reads NT. The active-site Proton donor/acceptor is Cys185. 186-187 contributes to the substrate binding site; sequence TH.

Belongs to the aspartate/glutamate racemases family.

The enzyme catalyses L-glutamate = D-glutamate. It functions in the pathway cell wall biogenesis; peptidoglycan biosynthesis. Its function is as follows. Provides the (R)-glutamate required for cell wall biosynthesis. The polypeptide is Glutamate racemase (Clostridium botulinum (strain 657 / Type Ba4)).